The following is a 336-amino-acid chain: CENP-A histone chaperone scm3 (336 aa).

Residues 243–269 form a disordered region; sequence RRRNPLLSSPKTPLRRSFSKSKVRNSN. The segment covering 255 to 269 has biased composition (basic residues); it reads PLRRSFSKSKVRNSN.

The protein resides in the cytoplasm. It is found in the nucleus. In terms of biological role, centromeric protein that plays a central role in the incorporation and maintenance of histone H3-like variant CENPA at centromeres. This chain is CENP-A histone chaperone scm3, found in Schizosaccharomyces pombe (strain 972 / ATCC 24843) (Fission yeast).